We begin with the raw amino-acid sequence, 595 residues long: Leiomodin-1 (595 aa).

2 disordered regions span residues 1–322 and 467–568; these read MSKV…KVKN and DKQR…QEKN. Residue Ser12 is modified to Phosphoserine. Residues 27–40 show a composition bias toward acidic residues; it reads EEMEELEKELDVVD. 8 stretches are compositionally biased toward basic and acidic residues: residues 72 to 105, 117 to 127, 134 to 193, 201 to 224, 232 to 251, 259 to 289, 467 to 476, and 484 to 493; these read CEKESKKIIQREMSVDESKQVGRKTDAKNGEDKG, QDSDVGKEPKK, FSRD…EKTG, SRDKDKKREEVKEPSKKEEVKLTA, RQEDGKQKESREDRDKKPEV, RDSRKEDEKVKKEETQPDKGVREEGKTREKQ, DKQRQKRLQE, and SGEKKDRLEV. At Ser85 the chain carries Phosphoserine. Position 135 is a phosphoserine (Ser135). A run of 8 repeats spans residues 165–180, 181–196, 197–212, 213–227, 228–243, 244–257, 258–273, and 274–288. Residues 165–288 are 8 X approximate tandem repeats; the sequence is AAVDRKEAGK…VREEGKTREK (124 aa). Pro residues-rich tracts occupy residues 503–513 and 527–538; these read SPKPSPQPSPK and AAPPPPPPPLAP. The segment at 503–522 is 5 X 4 AA approximate tandem repeats; sequence SPKPSPQPSPKSAPKNSPKK. Ser550 is subject to Phosphoserine. Residues 569–588 enclose the WH2 domain; sequence SRDQLLAAIRSSNLKQLKKV.

Detected in smooth muscle, in stomach and uterus, blood vessel wall, and in slow fibers in extraocular muscle, urinary bladder and sternothyroid muscle (at protein level).

Its subcellular location is the cytoplasm. The protein localises to the myofibril. The protein resides in the sarcomere. It is found in the cytoskeleton. Its function is as follows. Required for proper contractility of visceral smooth muscle cells. Mediates nucleation of actin filaments. This chain is Leiomodin-1, found in Rattus norvegicus (Rat).